Reading from the N-terminus, the 151-residue chain is Prefoldin subunit alpha (151 aa).

The protein belongs to the prefoldin subunit alpha family. In terms of assembly, heterohexamer of two alpha and four beta subunits.

The protein resides in the cytoplasm. In terms of biological role, molecular chaperone capable of stabilizing a range of proteins. Seems to fulfill an ATP-independent, HSP70-like function in archaeal de novo protein folding. This Sulfurisphaera tokodaii (strain DSM 16993 / JCM 10545 / NBRC 100140 / 7) (Sulfolobus tokodaii) protein is Prefoldin subunit alpha.